Reading from the N-terminus, the 261-residue chain is uncharacterized protein (261 aa).

The protein belongs to the FrhB family.

This is an uncharacterized protein from Methanocaldococcus jannaschii (strain ATCC 43067 / DSM 2661 / JAL-1 / JCM 10045 / NBRC 100440) (Methanococcus jannaschii).